The sequence spans 705 residues: Elongation factor G (705 aa).

Residues 8–294 (ELCRNFGIMA…SVIDYLPSPL (287 aa)) enclose the tr-type G domain. GTP-binding positions include 17-24 (AHIDAGKT), 92-96 (DTPGH), and 146-149 (NKMD).

This sequence belongs to the TRAFAC class translation factor GTPase superfamily. Classic translation factor GTPase family. EF-G/EF-2 subfamily.

Its subcellular location is the cytoplasm. Catalyzes the GTP-dependent ribosomal translocation step during translation elongation. During this step, the ribosome changes from the pre-translocational (PRE) to the post-translocational (POST) state as the newly formed A-site-bound peptidyl-tRNA and P-site-bound deacylated tRNA move to the P and E sites, respectively. Catalyzes the coordinated movement of the two tRNA molecules, the mRNA and conformational changes in the ribosome. The protein is Elongation factor G of Cereibacter sphaeroides (strain ATCC 17023 / DSM 158 / JCM 6121 / CCUG 31486 / LMG 2827 / NBRC 12203 / NCIMB 8253 / ATH 2.4.1.) (Rhodobacter sphaeroides).